Consider the following 192-residue polypeptide: RNA-free ribonuclease P (192 aa).

It belongs to the HARP family.

The enzyme catalyses Endonucleolytic cleavage of RNA, removing 5'-extranucleotides from tRNA precursor.. Functionally, RNA-free RNase P that catalyzes the removal of the 5'-leader sequence from pre-tRNA to produce the mature 5'-terminus. The polypeptide is RNA-free ribonuclease P (Alkalilimnicola ehrlichii (strain ATCC BAA-1101 / DSM 17681 / MLHE-1)).